Consider the following 156-residue polypeptide: Bursicon (156 aa).

Positions 1–26 (MYALDFLFIAFVYFAACHIQEKPVRA) are cleaved as a signal peptide. 5 cysteine pairs are disulfide-bonded: cysteine 37–cysteine 86, cysteine 51–cysteine 100, cysteine 61–cysteine 121, cysteine 65–cysteine 123, and cysteine 83–cysteine 126. A CTCK domain is found at 37–127 (CQMTPVIHIL…PLECMCRPCG (91 aa)).

Heterodimer of burs and pburs.

It is found in the secreted. Final heterodimeric neurohormone released at the end of the molting cycle, involved in the sclerotization (tanning) of the insect cuticle, melanization and wing spreading. The protein is Bursicon of Manduca sexta (Tobacco hawkmoth).